Here is a 212-residue protein sequence, read N- to C-terminus: Pyrrolidone-carboxylate peptidase (212 aa).

Catalysis depends on residues Glu80, Cys143, and His165.

This sequence belongs to the peptidase C15 family. In terms of assembly, homotetramer.

It localises to the cytoplasm. It catalyses the reaction Release of an N-terminal pyroglutamyl group from a polypeptide, the second amino acid generally not being Pro.. Functionally, removes 5-oxoproline from various penultimate amino acid residues except L-proline. In Vibrio parahaemolyticus serotype O3:K6 (strain RIMD 2210633), this protein is Pyrrolidone-carboxylate peptidase.